Here is a 411-residue protein sequence, read N- to C-terminus: Formate-dependent phosphoribosylglycinamide formyltransferase (411 aa).

25 to 26 (EL) is a N(1)-(5-phospho-beta-D-ribosyl)glycinamide binding site. ATP-binding positions include arginine 118, lysine 159, 164 to 169 (SSGAGQ), 199 to 202 (EQYI), and glutamate 207. The ATP-grasp domain maps to 123 to 318 (TFAHDKLGLP…EFDLHARAIL (196 aa)). The Mg(2+) site is built by glutamate 277 and glutamate 289. N(1)-(5-phospho-beta-D-ribosyl)glycinamide-binding positions include aspartate 296, lysine 366, and 373–374 (RR).

This sequence belongs to the PurK/PurT family. Homodimer.

The enzyme catalyses N(1)-(5-phospho-beta-D-ribosyl)glycinamide + formate + ATP = N(2)-formyl-N(1)-(5-phospho-beta-D-ribosyl)glycinamide + ADP + phosphate + H(+). Its pathway is purine metabolism; IMP biosynthesis via de novo pathway; N(2)-formyl-N(1)-(5-phospho-D-ribosyl)glycinamide from N(1)-(5-phospho-D-ribosyl)glycinamide (formate route): step 1/1. In terms of biological role, involved in the de novo purine biosynthesis. Catalyzes the transfer of formate to 5-phospho-ribosyl-glycinamide (GAR), producing 5-phospho-ribosyl-N-formylglycinamide (FGAR). Formate is provided by PurU via hydrolysis of 10-formyl-tetrahydrofolate. This chain is Formate-dependent phosphoribosylglycinamide formyltransferase, found in Corynebacterium jeikeium (strain K411).